The primary structure comprises 353 residues: S-adenosylmethionine:tRNA ribosyltransferase-isomerase (353 aa).

Belongs to the QueA family. In terms of assembly, monomer.

It localises to the cytoplasm. It carries out the reaction 7-aminomethyl-7-carbaguanosine(34) in tRNA + S-adenosyl-L-methionine = epoxyqueuosine(34) in tRNA + adenine + L-methionine + 2 H(+). It functions in the pathway tRNA modification; tRNA-queuosine biosynthesis. Transfers and isomerizes the ribose moiety from AdoMet to the 7-aminomethyl group of 7-deazaguanine (preQ1-tRNA) to give epoxyqueuosine (oQ-tRNA). This chain is S-adenosylmethionine:tRNA ribosyltransferase-isomerase, found in Marinomonas sp. (strain MWYL1).